The chain runs to 93 residues: Phosphoribosyl-ATP pyrophosphatase (93 aa).

It belongs to the PRA-PH family.

The protein resides in the cytoplasm. The enzyme catalyses 1-(5-phospho-beta-D-ribosyl)-ATP + H2O = 1-(5-phospho-beta-D-ribosyl)-5'-AMP + diphosphate + H(+). The protein operates within amino-acid biosynthesis; L-histidine biosynthesis; L-histidine from 5-phospho-alpha-D-ribose 1-diphosphate: step 2/9. The chain is Phosphoribosyl-ATP pyrophosphatase from Mycobacterium sp. (strain JLS).